The chain runs to 491 residues: Trypanothione reductase (491 aa).

35 to 51 (DLQKHHGPPHYAALGGT) contacts FAD. C52 and C57 are joined by a disulfide. Residue H461 is the Proton acceptor of the active site.

The protein belongs to the class-I pyridine nucleotide-disulfide oxidoreductase family. As to quaternary structure, homodimer. FAD is required as a cofactor. In terms of processing, the N-terminus is blocked.

Its subcellular location is the cytoplasm. It carries out the reaction trypanothione + NADP(+) = trypanothione disulfide + NADPH + H(+). In terms of biological role, trypanothione is the parasite analog of glutathione; this enzyme is the equivalent of glutathione reductase. This Crithidia fasciculata protein is Trypanothione reductase (TPR).